The sequence spans 362 residues: Putative lipoprotein YdaJ (362 aa).

The signal sequence occupies residues 1 to 20; that stretch reads MRHVLIAVILFFLSIGLSAG. Cys-21 is lipidated: N-palmitoyl cysteine. The S-diacylglycerol cysteine moiety is linked to residue Cys-21.

The protein localises to the cell membrane. The polypeptide is Putative lipoprotein YdaJ (ydaJ) (Bacillus subtilis (strain 168)).